The following is a 697-amino-acid chain: MTAKPHKSCQFKRDYPQLINLYPPCALTTAQSLDNFTRLRRSRLTTPSAQLGQELYVMGQWGLGDGLELLSLLHHWQTQTQSNTRLLVKVFEPNPINDYELKLLWDQSQSLISTPHLQPIANAILKAKPARIIGCQRLIFDDGRITVDLHFGDLHTSLTNLPHSPAHPIQQWLVLPHLASQLSGKLAWQMARLSADDAQLIGVNLAETVQQLAHSSGFSTLNVSQDALNGDASDALPSQIITDEILLHERKLLRQQADTAQAFTPKPATLAAIDHPVAIVGGGLASANLMLSLAERGQSSTLFCKDNELGQGASGNRQGAIYPLLTPENDELSRFFQQAFLFSRRRIEALSQASMMDTNAAPHVTVISHDFCGVLQTGHDERSQQRLDKIIQSQDWPAEIAYAVDANEANEIAQIGIDKAGFFYPLGGWVCPFEYAKAAVDKASQLANVQCHFNTEITEIECDAQAWYLHSQGQRFGPFRQLVLANGAQLTQFSASERLQISPFRGQVSHVPAQFKLSQLATVLCANGYLTPSHQGLHCLGASYVKAAEHFDFCPQEQRENLGKMQESYPNQAWVDDIDISGNSARVGVRMVTRDHFPMMGCAPDVAEILARYELHQLNQQQAEQSKHYWQTTPAPILDGLYILGGLGSRGLSSGPLAAECLAAQLTGEPLPLDWSTLNKLNPNRMWLRKLLKGKAL.

The tRNA (mnm(5)s(2)U34)-methyltransferase stretch occupies residues 1–275 (MTAKPHKSCQ…KPATLAAIDH (275 aa)). Positions 280–697 (VGGGLASANL…LRKLLKGKAL (418 aa)) are FAD-dependent cmnm(5)s(2)U34 oxidoreductase.

In the N-terminal section; belongs to the methyltransferase superfamily. tRNA (mnm(5)s(2)U34)-methyltransferase family. The protein in the C-terminal section; belongs to the DAO family. FAD serves as cofactor.

It is found in the cytoplasm. The enzyme catalyses 5-aminomethyl-2-thiouridine(34) in tRNA + S-adenosyl-L-methionine = 5-methylaminomethyl-2-thiouridine(34) in tRNA + S-adenosyl-L-homocysteine + H(+). Functionally, catalyzes the last two steps in the biosynthesis of 5-methylaminomethyl-2-thiouridine (mnm(5)s(2)U) at the wobble position (U34) in tRNA. Catalyzes the FAD-dependent demodification of cmnm(5)s(2)U34 to nm(5)s(2)U34, followed by the transfer of a methyl group from S-adenosyl-L-methionine to nm(5)s(2)U34, to form mnm(5)s(2)U34. The chain is tRNA 5-methylaminomethyl-2-thiouridine biosynthesis bifunctional protein MnmC from Shewanella sp. (strain ANA-3).